A 678-amino-acid polypeptide reads, in one-letter code: uncharacterized protein (678 aa).

8 helical membrane-spanning segments follow: residues Phe-228–Leu-250, Leu-263–Gln-285, Ser-300–Val-322, Met-334–Phe-356, Phe-361–Ala-380, Arg-387–Leu-405, Asn-420–Phe-439, and Asn-455–Leu-477. A disordered region spans residues Pro-653 to Glu-678.

Its subcellular location is the cell membrane. This is an uncharacterized protein from Treponema pallidum (strain Nichols).